The primary structure comprises 326 residues: Cell surface glycoprotein CD200 receptor 1 (326 aa).

An N-terminal signal peptide occupies residues 1–25 (MFCFWRTSALAVLLIWGVFVAGSSC). Residues 26 to 238 (TDKNQTTQNN…SRGGNQSLRP (213 aa)) are Extracellular-facing. 11 N-linked (GlcNAc...) asparagine glycosylation sites follow: asparagine 29, asparagine 34, asparagine 35, asparagine 44, asparagine 93, asparagine 101, asparagine 159, asparagine 192, asparagine 207, asparagine 221, and asparagine 233. Positions 51 to 136 (IGTKALLCCF…YTCETVTPEG (86 aa)) constitute an Ig-like V-type domain. 2 disulfides stabilise this stretch: cysteine 58-cysteine 129 and cysteine 82-cysteine 97. The region spanning 138–229 (FEKNYDLQVL…GNQSLSIELS (92 aa)) is the Ig-like C2-type domain. Cystine bridges form between cysteine 164-cysteine 213 and cysteine 183-cysteine 201. The helical transmembrane segment at 239-259 (YIPYIIPSIIILIIIGCICLL) threads the bilayer. Residues 260 to 326 (KISGFRKCKL…DCLTLSAIGI (67 aa)) lie on the Cytoplasmic side of the membrane.

It belongs to the CD200R family. In terms of assembly, CD200 and CD200R1 interact via their respective N-terminal Ig-like domains. As to expression, expressed in granulocytes, monocytes, most T-cells and a subset of NK, NKT and B-cells (at protein level). Expressed in the spleen, lung, liver, testis, bone marrow, lymph nodes, spinal cord, kidney, uterus and small intestine. Expressed in mast and dendritic cells. Expressed in the lung of N.brasiliensis-infected mice.

It localises to the cell membrane. Functionally, inhibitory receptor for the CD200/OX2 cell surface glycoprotein. Limits inflammation by inhibiting the expression of pro-inflammatory molecules including TNF-alpha, interferons, and inducible nitric oxide synthase (iNOS) in response to selected stimuli. In Mus musculus (Mouse), this protein is Cell surface glycoprotein CD200 receptor 1 (Cd200r1).